A 115-amino-acid chain; its full sequence is MAIRVELLLAMVLLPLLLLESVVPHAAAEKVWVDRDNVYCGHLDCTRVATFKGERFCTLCDTRHFCECKETREPLPYMYACPGTEPCQSSDRLGSCSKSMHDVLCDRIDQAFLEQ.

Residues 1–28 (MAIRVELLLAMVLLPLLLLESVVPHAAA) form the signal peptide.

As to expression, female saliva (at protein level). Distal-lateral lobes of female salivary gland (at protein level). Not detected in male salivary gland (at protein level).

It is found in the secreted. Its function is as follows. Required for efficient probing and blood feeding. This Anopheles gambiae (African malaria mosquito) protein is Salivary protein gSG6.